The following is a 452-amino-acid chain: Type II methyltransferase M.EcaI (452 aa).

This sequence belongs to the N(4)/N(6)-methyltransferase family.

It catalyses the reaction a 2'-deoxyadenosine in DNA + S-adenosyl-L-methionine = an N(6)-methyl-2'-deoxyadenosine in DNA + S-adenosyl-L-homocysteine + H(+). In terms of biological role, a beta subtype methylase, recognizes the double-stranded sequence 5'-GGTNACC-3', methylates A-5 on both strands and protects the DNA from cleavage by the EcaI endonuclease. In Enterobacter cloacae, this protein is Type II methyltransferase M.EcaI (ecaIM).